The following is a 276-amino-acid chain: Shikimate dehydrogenase (NADP(+)) (276 aa).

Shikimate-binding positions include 15 to 17 (SLS) and Thr62. Lys66 functions as the Proton acceptor in the catalytic mechanism. Glu78 serves as a coordination point for NADP(+). Shikimate-binding residues include Asn87 and Asp102. NADP(+) is bound by residues 151-156 (NRTVEK) and Ile218. Shikimate is bound at residue Tyr220. Gly241 lines the NADP(+) pocket.

This sequence belongs to the shikimate dehydrogenase family. In terms of assembly, homodimer.

It carries out the reaction shikimate + NADP(+) = 3-dehydroshikimate + NADPH + H(+). It functions in the pathway metabolic intermediate biosynthesis; chorismate biosynthesis; chorismate from D-erythrose 4-phosphate and phosphoenolpyruvate: step 4/7. Its function is as follows. Involved in the biosynthesis of the chorismate, which leads to the biosynthesis of aromatic amino acids. Catalyzes the reversible NADPH linked reduction of 3-dehydroshikimate (DHSA) to yield shikimate (SA). This Geobacillus kaustophilus (strain HTA426) protein is Shikimate dehydrogenase (NADP(+)).